The following is a 594-amino-acid chain: UvrABC system protein C (594 aa).

One can recognise a GIY-YIG domain in the interval 14-91; it reads DSPGCYLHKD…IQENMPKYNI (78 aa). Residues 196–231 enclose the UVR domain; sequence DKIIDDLRSKMLEASHNQEFERAAEYRDLISGIATM.

The protein belongs to the UvrC family. Interacts with UvrB in an incision complex.

The protein resides in the cytoplasm. Its function is as follows. The UvrABC repair system catalyzes the recognition and processing of DNA lesions. UvrC both incises the 5' and 3' sides of the lesion. The N-terminal half is responsible for the 3' incision and the C-terminal half is responsible for the 5' incision. This Streptococcus equi subsp. equi (strain 4047) protein is UvrABC system protein C.